Reading from the N-terminus, the 224-residue chain is Cytidylate kinase (224 aa).

11-19 (GPAAAGKST) is a binding site for ATP.

This sequence belongs to the cytidylate kinase family. Type 1 subfamily.

Its subcellular location is the cytoplasm. It catalyses the reaction CMP + ATP = CDP + ADP. The enzyme catalyses dCMP + ATP = dCDP + ADP. In Listeria innocua serovar 6a (strain ATCC BAA-680 / CLIP 11262), this protein is Cytidylate kinase.